Consider the following 272-residue polypeptide: 2-amino-3,7-dideoxy-D-threo-hept-6-ulosonate synthase (272 aa).

The Proton acceptor role is filled by Asp33. 1-deoxy-D-threo-hexo-2,5-diulose 6-phosphate-binding positions include 33 to 37 (DHGVS) and 153 to 155 (YPR). Tyr153 acts as the Proton donor in catalysis. The Schiff-base intermediate with substrate role is filled by Lys184. 1-deoxy-D-threo-hexo-2,5-diulose 6-phosphate contacts are provided by residues 209-210 (GG) and 237-238 (GR).

It belongs to the DeoC/FbaB aldolase family. ADHS subfamily. In terms of assembly, homodecamer.

It catalyses the reaction 1-deoxy-D-threo-hexo-2,5-diulose 6-phosphate + L-aspartate 4-semialdehyde = 2,3-dioxopropyl phosphate + 2-amino-2,3,7-trideoxy-D-lyxo-hept-6-ulosonate. In terms of biological role, catalyzes a transaldol reaction between 6-deoxy-5-ketofructose 1-phosphate (DKFP) and L-aspartate semialdehyde (ASA) with an elimination of hydroxypyruvaldehyde phosphate to yield 2-amino-3,7-dideoxy-D-threo-hept-6-ulosonate (ADH). Plays a key role in an alternative pathway of the biosynthesis of 3-dehydroquinate (DHQ), which is involved in the canonical pathway for the biosynthesis of aromatic amino acids. This is 2-amino-3,7-dideoxy-D-threo-hept-6-ulosonate synthase from Methanococcus vannielii (strain ATCC 35089 / DSM 1224 / JCM 13029 / OCM 148 / SB).